Reading from the N-terminus, the 723-residue chain is Malate synthase G (723 aa).

Acetyl-CoA is bound by residues valine 118, 125-126 (RY), serine 274, and arginine 311. The Proton acceptor role is filled by arginine 338. Residues arginine 338, glutamate 427, and 452–455 (GFLD) contribute to the glyoxylate site. Residues glutamate 427 and aspartate 455 each contribute to the Mg(2+) site. Proline 536 contributes to the acetyl-CoA binding site. Cysteine 617 is subject to Cysteine sulfenic acid (-SOH). Aspartate 631 acts as the Proton donor in catalysis. A Cysteine sulfenic acid (-SOH) modification is found at cysteine 688.

This sequence belongs to the malate synthase family. GlcB subfamily. As to quaternary structure, monomer. The cofactor is Mg(2+).

It localises to the cytoplasm. The catalysed reaction is glyoxylate + acetyl-CoA + H2O = (S)-malate + CoA + H(+). It participates in carbohydrate metabolism; glyoxylate cycle; (S)-malate from isocitrate: step 2/2. Functionally, involved in the glycolate utilization. Catalyzes the condensation and subsequent hydrolysis of acetyl-coenzyme A (acetyl-CoA) and glyoxylate to form malate and CoA. The polypeptide is Malate synthase G (Escherichia coli O6:H1 (strain CFT073 / ATCC 700928 / UPEC)).